The chain runs to 317 residues: NAC domain-containing protein 19 (317 aa).

The NAC domain occupies 14-162 (LPPGFRFYPT…DWVLCRIYKK (149 aa)).

As to quaternary structure, dimer. Interacts with RHA2A, RHA2B or RHG1A, but not with RHA3A or RHA3B. In terms of tissue distribution, expressed in stems, flowers, cauline leaves and rosettes.

The protein resides in the nucleus. In terms of biological role, transcription factors that bind specifically to the 5'-CATGTG-3' motif. This chain is NAC domain-containing protein 19 (NAC019), found in Arabidopsis thaliana (Mouse-ear cress).